A 239-amino-acid chain; its full sequence is Gene 88 protein (239 aa).

The protein is Gene 88 protein (88) of Mycobacterium (Mycobacteriophage L5).